The sequence spans 598 residues: Elongation factor 4 (598 aa).

Positions 4–185 constitute a tr-type G domain; that stretch reads KNIRNFSIIA…TIITKIPAPK (182 aa). GTP is bound by residues 16–21 and 132–135; these read DHGKST and NKID.

It belongs to the TRAFAC class translation factor GTPase superfamily. Classic translation factor GTPase family. LepA subfamily.

The protein resides in the cell inner membrane. It catalyses the reaction GTP + H2O = GDP + phosphate + H(+). Its function is as follows. Required for accurate and efficient protein synthesis under certain stress conditions. May act as a fidelity factor of the translation reaction, by catalyzing a one-codon backward translocation of tRNAs on improperly translocated ribosomes. Back-translocation proceeds from a post-translocation (POST) complex to a pre-translocation (PRE) complex, thus giving elongation factor G a second chance to translocate the tRNAs correctly. Binds to ribosomes in a GTP-dependent manner. The chain is Elongation factor 4 from Campylobacter jejuni subsp. jejuni serotype O:2 (strain ATCC 700819 / NCTC 11168).